The following is a 690-amino-acid chain: Glycine--tRNA ligase beta subunit (690 aa).

Belongs to the class-II aminoacyl-tRNA synthetase family. Tetramer of two alpha and two beta subunits.

It localises to the cytoplasm. It catalyses the reaction tRNA(Gly) + glycine + ATP = glycyl-tRNA(Gly) + AMP + diphosphate. The protein is Glycine--tRNA ligase beta subunit of Desulfatibacillum aliphaticivorans.